A 328-amino-acid chain; its full sequence is Nucleotide-binding protein BL0705 (328 aa).

The tract at residues 1 to 35 (MNQQTTNRDTGEAAATNAPANSATSTSTPDNQPTP) is disordered. Over residues 13-29 (AAATNAPANSATSTSTP) the composition is skewed to low complexity. An ATP-binding site is contributed by 46 to 53 (GMSGAGRS). 101–104 (DVRS) provides a ligand contact to GTP.

The protein belongs to the RapZ-like family.

In terms of biological role, displays ATPase and GTPase activities. The protein is Nucleotide-binding protein BL0705 of Bifidobacterium longum (strain NCC 2705).